Consider the following 69-residue polypeptide: DNA-directed RNA polymerase subunit epsilon (69 aa).

Belongs to the RNA polymerase subunit epsilon family. RNAP is composed of a core of 2 alpha, a beta and a beta' subunit. The core is associated with a delta subunit, and at least one of epsilon or omega. When a sigma factor is associated with the core the holoenzyme is formed, which can initiate transcription.

The catalysed reaction is RNA(n) + a ribonucleoside 5'-triphosphate = RNA(n+1) + diphosphate. A non-essential component of RNA polymerase (RNAP). The protein is DNA-directed RNA polymerase subunit epsilon of Bacillus velezensis (strain DSM 23117 / BGSC 10A6 / LMG 26770 / FZB42) (Bacillus amyloliquefaciens subsp. plantarum).